We begin with the raw amino-acid sequence, 259 residues long: Ribosomal RNA small subunit methyltransferase A (259 aa).

S-adenosyl-L-methionine contacts are provided by Asn13, Leu15, Gly40, Glu61, Asp85, and Asn103.

This sequence belongs to the class I-like SAM-binding methyltransferase superfamily. rRNA adenine N(6)-methyltransferase family. RsmA subfamily.

The protein localises to the cytoplasm. It catalyses the reaction adenosine(1518)/adenosine(1519) in 16S rRNA + 4 S-adenosyl-L-methionine = N(6)-dimethyladenosine(1518)/N(6)-dimethyladenosine(1519) in 16S rRNA + 4 S-adenosyl-L-homocysteine + 4 H(+). Functionally, specifically dimethylates two adjacent adenosines (A1518 and A1519) in the loop of a conserved hairpin near the 3'-end of 16S rRNA in the 30S particle. May play a critical role in biogenesis of 30S subunits. The polypeptide is Ribosomal RNA small subunit methyltransferase A (Neisseria meningitidis serogroup A / serotype 4A (strain DSM 15465 / Z2491)).